The primary structure comprises 90 residues: Probable Fe(2+)-trafficking protein (90 aa).

It belongs to the Fe(2+)-trafficking protein family.

In terms of biological role, could be a mediator in iron transactions between iron acquisition and iron-requiring processes, such as synthesis and/or repair of Fe-S clusters in biosynthetic enzymes. The sequence is that of Probable Fe(2+)-trafficking protein from Azotobacter vinelandii (strain DJ / ATCC BAA-1303).